Here is a 253-residue protein sequence, read N- to C-terminus: MTTIDLNCDLGESFGAYKMGNDDEILPFVSSINVACGFHAGDPSVMRQTVEKAMQHNVAIGAHPGFPDLIGFGRRNMNVSASEVYDYVLYQIGALDTFVKAAGGKMHHVKPHGALYNMAATNPEIADAIAKAIYHSNPSLLFYGLANSEAFIQAAEKYNITLVQEAFADRTYKQDGTLTSRTEENALIKNEEEAIKQVLQMVKEGYVNSVNGEKVAVQAQTICLHGDGEKAVQFARRIYRTFENNEISICTPK.

Belongs to the LamB/PxpA family. Forms a complex composed of PxpA, PxpB and PxpC.

The catalysed reaction is 5-oxo-L-proline + ATP + 2 H2O = L-glutamate + ADP + phosphate + H(+). Catalyzes the cleavage of 5-oxoproline to form L-glutamate coupled to the hydrolysis of ATP to ADP and inorganic phosphate. This is 5-oxoprolinase subunit A from Bacillus cereus (strain ZK / E33L).